The sequence spans 548 residues: uncharacterized protein (548 aa).

Short-chain dehydrogenase/reductase regions lie at residues 1-250 (MDDR…WMSV) and 271-548 (PVED…LLSP). 12-37 (IVVTGAAGGIGRALVDIFAANGDVVV) contacts NADP(+). Position 141 (S141) interacts with substrate. Catalysis depends on Y154, which acts as the Proton acceptor. 280-304 (VIVMGGATGVGAAIARRFAENGDTV) serves as a coordination point for NADP(+). Residue Y420 is the Proton acceptor of the active site.

This sequence belongs to the short-chain dehydrogenases/reductases (SDR) family.

This is an uncharacterized protein from Sinorhizobium fredii (strain NBRC 101917 / NGR234).